A 299-amino-acid polypeptide reads, in one-letter code: 4-diphosphocytidyl-2-C-methyl-D-erythritol kinase (299 aa).

Lys18 is a catalytic residue. Pro104–Ser114 contacts ATP. Asp146 is an active-site residue.

The protein belongs to the GHMP kinase family. IspE subfamily.

It catalyses the reaction 4-CDP-2-C-methyl-D-erythritol + ATP = 4-CDP-2-C-methyl-D-erythritol 2-phosphate + ADP + H(+). It functions in the pathway isoprenoid biosynthesis; isopentenyl diphosphate biosynthesis via DXP pathway; isopentenyl diphosphate from 1-deoxy-D-xylulose 5-phosphate: step 3/6. Its function is as follows. Catalyzes the phosphorylation of the position 2 hydroxy group of 4-diphosphocytidyl-2C-methyl-D-erythritol. This chain is 4-diphosphocytidyl-2-C-methyl-D-erythritol kinase, found in Brucella abortus biovar 1 (strain 9-941).